The chain runs to 315 residues: Protein FRA10AC1 homolog (315 aa).

N-acetylmethionine is present on M1. The interval 1-28 (MHGHGGYDSDFSDDEQGGGSSKKRKKTV) is disordered. Phosphoserine occurs at positions 9 and 12. At K36 the chain carries N6-acetyllysine. Residues 225-235 (KEIKSTKKRSK) show a composition bias toward basic residues. The tract at residues 225–308 (KEIKSTKKRS…EKSQEEEFDD (84 aa)) is disordered. The segment covering 236-245 (TKTESDESPH) has biased composition (basic and acidic residues). Phosphoserine is present on residues S251 and S252. The segment covering 257–279 (SQGKDEGHSSSKRSEDSRNRNAG) has biased composition (basic and acidic residues). A phosphoserine mark is found at S283 and S285.

As to quaternary structure, interacts with ESS2.

Its subcellular location is the nucleus. Functionally, may be involved in pre-mRNA splicing. This chain is Protein FRA10AC1 homolog (Fra10ac1), found in Rattus norvegicus (Rat).